The chain runs to 417 residues: CinA-like protein (417 aa).

Belongs to the CinA family.

This chain is CinA-like protein, found in Synechococcus sp. (strain RCC307).